We begin with the raw amino-acid sequence, 45 residues long: AKAKRSPRKKKAAVKKSSKSKAKKPKSPKKKKAAKKPAKKAAKKK.

The disordered stretch occupies residues 1–45 (AKAKRSPRKKKAAVKKSSKSKAKKPKSPKKKKAAKKPAKKAAKKK).

The protein localises to the nucleus. Its subcellular location is the chromosome. In terms of biological role, involved in nuclear basic protein transition: histones are replaced by spermatid specific proteins which are themselves replaced by protamines in late spermatids. In Mytilus californianus (California mussel), this protein is Sperm-specific protein Phi-3.